The chain runs to 181 residues: Probable RNA 2'-phosphotransferase (181 aa).

Belongs to the KptA/TPT1 family.

Functionally, removes the 2'-phosphate from RNA via an intermediate in which the phosphate is ADP-ribosylated by NAD followed by a presumed transesterification to release the RNA and generate ADP-ribose 1''-2''-cyclic phosphate (APPR&gt;P). May function as an ADP-ribosylase. The protein is Probable RNA 2'-phosphotransferase of Nostoc punctiforme (strain ATCC 29133 / PCC 73102).